A 542-amino-acid polypeptide reads, in one-letter code: CTP synthase (542 aa).

An amidoligase domain region spans residues 1 to 265; that stretch reads MARYVFITGG…DSEVLSAFGI (265 aa). Position 13 (S13) interacts with CTP. Residue S13 coordinates UTP. Residue 14–19 coordinates ATP; it reads SLGKGI. Y54 provides a ligand contact to L-glutamine. Position 71 (D71) interacts with ATP. Mg(2+) contacts are provided by D71 and E139. CTP-binding positions include 146 to 148, 186 to 191, and K222; these read DIE and KTKPTQ. UTP is bound by residues 186–191 and K222; that span reads KTKPTQ. One can recognise a Glutamine amidotransferase type-1 domain in the interval 291–541; the sequence is TIAVVGKYTG…IEAAIEQSRL (251 aa). G353 contacts L-glutamine. The active-site Nucleophile; for glutamine hydrolysis is C380. L-glutamine-binding positions include 381–384, E404, and R469; that span reads FGMQ. Residues H514 and E516 contribute to the active site.

Belongs to the CTP synthase family. Homotetramer.

The enzyme catalyses UTP + L-glutamine + ATP + H2O = CTP + L-glutamate + ADP + phosphate + 2 H(+). The catalysed reaction is L-glutamine + H2O = L-glutamate + NH4(+). It carries out the reaction UTP + NH4(+) + ATP = CTP + ADP + phosphate + 2 H(+). The protein operates within pyrimidine metabolism; CTP biosynthesis via de novo pathway; CTP from UDP: step 2/2. Allosterically activated by GTP, when glutamine is the substrate; GTP has no effect on the reaction when ammonia is the substrate. The allosteric effector GTP functions by stabilizing the protein conformation that binds the tetrahedral intermediate(s) formed during glutamine hydrolysis. Inhibited by the product CTP, via allosteric rather than competitive inhibition. Functionally, catalyzes the ATP-dependent amination of UTP to CTP with either L-glutamine or ammonia as the source of nitrogen. Regulates intracellular CTP levels through interactions with the four ribonucleotide triphosphates. The protein is CTP synthase of Brucella abortus (strain 2308).